The primary structure comprises 259 residues: PF03932 family protein CutC (259 aa).

The protein belongs to the CutC family. In terms of assembly, homodimer.

Its subcellular location is the cytoplasm. The polypeptide is PF03932 family protein CutC (Salmonella typhi).